Consider the following 677-residue polypeptide: Methionine--tRNA ligase (677 aa).

The 'HIGH' region signature appears at 15–25; sequence PYANGSIHLGH. Residues Cys-146, Cys-149, Cys-159, and Cys-162 each contribute to the Zn(2+) site. The 'KMSKS' region motif lies at 333–337; that stretch reads KMSKS. Lys-336 contacts ATP. The 103-residue stretch at 575–677 folds into the tRNA-binding domain; it reads DFAKVDLRVA…AGAKPGHQVK (103 aa).

This sequence belongs to the class-I aminoacyl-tRNA synthetase family. MetG type 1 subfamily. In terms of assembly, homodimer. Zn(2+) is required as a cofactor.

The protein localises to the cytoplasm. It carries out the reaction tRNA(Met) + L-methionine + ATP = L-methionyl-tRNA(Met) + AMP + diphosphate. Is required not only for elongation of protein synthesis but also for the initiation of all mRNA translation through initiator tRNA(fMet) aminoacylation. The polypeptide is Methionine--tRNA ligase (Escherichia coli O157:H7).